A 405-amino-acid chain; its full sequence is Argininosuccinate synthase (405 aa).

Residues 12-20 and alanine 40 contribute to the ATP site; that span reads AYSGGLDTS. L-citrulline is bound by residues tyrosine 92 and serine 97. Residue glycine 122 participates in ATP binding. The L-aspartate site is built by threonine 124, asparagine 128, and aspartate 129. Asparagine 128 contributes to the L-citrulline binding site. Residues arginine 132, serine 181, serine 190, glutamate 266, and tyrosine 278 each contribute to the L-citrulline site.

It belongs to the argininosuccinate synthase family. Type 1 subfamily. As to quaternary structure, homotetramer.

The protein localises to the cytoplasm. The catalysed reaction is L-citrulline + L-aspartate + ATP = 2-(N(omega)-L-arginino)succinate + AMP + diphosphate + H(+). It participates in amino-acid biosynthesis; L-arginine biosynthesis; L-arginine from L-ornithine and carbamoyl phosphate: step 2/3. This chain is Argininosuccinate synthase, found in Edwardsiella ictaluri (strain 93-146).